Consider the following 478-residue polypeptide: Monocarboxylate transporter 2 (478 aa).

At 1–15 the chain is on the cytoplasmic side; that stretch reads MPPMPSAPPVHPPPD. The chain crosses the membrane as a helical span at residues 16–36; that stretch reads GGWGWIVVGAAFISIGFSYAF. Over 37–59 the chain is Extracellular; that stretch reads PKAVTVFFKEIQQIFHTTYSEIA. The helical transmembrane segment at 60–80 threads the bilayer; the sequence is WISSIMLAVMYAGGPVSSVLV. Over 81–89 the chain is Cytoplasmic; sequence NKYGSRPVV. A helical transmembrane segment spans residues 90-110; the sequence is IAGGLLCCLGMVLASFSSSVV. Over 111 to 115 the chain is Extracellular; the sequence is QLYLT. Residues 116-136 traverse the membrane as a helical segment; the sequence is MGFITGLGLAFNLQPALTIIG. The Cytoplasmic segment spans residues 137-148; that stretch reads KYFYRKRPMANG. Residues 149–169 traverse the membrane as a helical segment; sequence LAMAGSPVFLSSLAPFNQYLF. At 170 to 173 the chain is on the extracellular side; that stretch reads NTFG. A helical transmembrane segment spans residues 174–194; sequence WKGSFLILGSLLLNACVAGSL. The Cytoplasmic portion of the chain corresponds to 195–246; that stretch reads MRPLGPNQTTSKSKNKTGKTEDDSSPKKIKTKKSTWEKVNKYLDFSLFKHRG. Residues 200–224 are disordered; it reads PNQTTSKSKNKTGKTEDDSSPKKIK. A helical transmembrane segment spans residues 247-267; sequence FLIYLSGNVIMFLGFFAPIIF. Residues 268–282 are Extracellular-facing; the sequence is LAPYAKDQGIDEYSA. A helical membrane pass occupies residues 283-303; that stretch reads AFLLSVMAFVDMFARPSVGLI. Topologically, residues 304–312 are cytoplasmic; sequence ANSKYIRPR. A helical membrane pass occupies residues 313 to 333; that stretch reads IQYFFSFAIMFNGVCHLLCPL. Topologically, residues 334–338 are extracellular; that stretch reads AQDYT. The chain crosses the membrane as a helical span at residues 339–359; the sequence is SLVLYAVFFGLGFGSVSSVLF. Residues 360 to 373 are Cytoplasmic-facing; the sequence is ETLMDLVGAPRFSS. Residues 374–394 traverse the membrane as a helical segment; sequence AVGLVTIVECGPVLLGPPLAG. Over 395-406 the chain is Extracellular; sequence KLVDLTGEYKYM. Residues 407-427 traverse the membrane as a helical segment; sequence YMSCGAIVVAASVWLLIGNAI. Residues 428–478 lie on the Cytoplasmic side of the membrane; that stretch reads NYRLLAKERKEENARQKTRESEPLSKSKHSEDVNVKVSNAQSVTSERETNI. Residues 437–461 are compositionally biased toward basic and acidic residues; the sequence is KEENARQKTRESEPLSKSKHSEDVN. A disordered region spans residues 437–478; that stretch reads KEENARQKTRESEPLSKSKHSEDVNVKVSNAQSVTSERETNI.

The protein belongs to the major facilitator superfamily. Monocarboxylate porter (TC 2.A.1.13) family. Homodimer. Interacts with GRID2IP. Interacts with EMB; interaction mediates SLC16A7 targeting to the plasma membrane. Interacts with isoform 2 of BSG. Detected in heart and in blood lymphocytes and monocytes (at protein level). High expression in testis, moderate to low in spleen, heart, kidney, pancreas, skeletal muscle, brain and leukocyte. Restricted expression in normal tissues, but widely expressed in cancer cells.

It localises to the cell membrane. The protein localises to the basolateral cell membrane. The protein resides in the cytoplasm. The catalysed reaction is pyruvate(out) + H(+)(out) = pyruvate(in) + H(+)(in). The enzyme catalyses 3-methyl-2-oxobutanoate(out) + H(+)(out) = 3-methyl-2-oxobutanoate(in) + H(+)(in). It catalyses the reaction (S)-lactate(in) + H(+)(in) = (S)-lactate(out) + H(+)(out). It carries out the reaction acetoacetate(out) + H(+)(out) = acetoacetate(in) + H(+)(in). The catalysed reaction is (R)-3-hydroxybutanoate(out) + H(+)(out) = (R)-3-hydroxybutanoate(in) + H(+)(in). The enzyme catalyses 4-methyl-2-oxopentanoate(out) + H(+)(out) = 4-methyl-2-oxopentanoate(in) + H(+)(in). It catalyses the reaction (S)-3-hydroxybutanoate(out) + H(+)(out) = (S)-3-hydroxybutanoate(in) + H(+)(in). Transport activity exhibits steep dependence on substrate concentration. Substrate concentration sensitivity of SLC16A7 arises from the strong inter-subunit cooperativity of the SLC16A7 dimer during transport. Inhibited by AR-C155858. Functionally, proton-coupled monocarboxylate symporter. Catalyzes the rapid transport across the plasma membrane of monocarboxylates such as L-lactate, pyruvate and ketone bodies, acetoacetate, beta-hydroxybutyrate and acetate. Dimerization is functionally required and both subunits work cooperatively in transporting substrate. The chain is Monocarboxylate transporter 2 from Homo sapiens (Human).